The following is a 23-amino-acid chain: U1-poneritoxin-Da3b (23 aa).

Belongs to the non-disulfide-bridged peptide (NDBP) superfamily. Medium-length antimicrobial peptide (group 3) family. Ponericin-W subfamily. Expressed by the venom gland.

The protein localises to the secreted. Its subcellular location is the target cell membrane. May have antimicrobial properties, like most ant linear peptides. May act by disrupting the integrity of the bacterial cell membrane. This chain is U1-poneritoxin-Da3b, found in Dinoponera australis (Giant neotropical hunting ant).